Consider the following 156-residue polypeptide: Small ribosomal subunit protein uS7 (156 aa).

This sequence belongs to the universal ribosomal protein uS7 family. As to quaternary structure, part of the 30S ribosomal subunit. Contacts proteins S9 and S11.

Functionally, one of the primary rRNA binding proteins, it binds directly to 16S rRNA where it nucleates assembly of the head domain of the 30S subunit. Is located at the subunit interface close to the decoding center, probably blocks exit of the E-site tRNA. The protein is Small ribosomal subunit protein uS7 of Hyphomonas neptunium (strain ATCC 15444).